A 206-amino-acid polypeptide reads, in one-letter code: HTH-type transcriptional regulator Hpr (206 aa).

The 145-residue stretch at 13 to 157 (ALLFSQRMAQ…MMSIIRHIYG (145 aa)) folds into the HTH marR-type domain. The H-T-H motif DNA-binding region spans 63 to 86 (ISEIAKFGVMHVSTAFNFSKKLEE). Residues 177 to 206 (SEEGKMKKKQEAKEAGESIEVDKPLEPLKN) form a disordered region. Residues 178-206 (EEGKMKKKQEAKEAGESIEVDKPLEPLKN) are compositionally biased toward basic and acidic residues.

Homodimer.

Functionally, negative regulator of protease production and sporulation. The chain is HTH-type transcriptional regulator Hpr from Bacillus licheniformis (strain ATCC 14580 / DSM 13 / JCM 2505 / CCUG 7422 / NBRC 12200 / NCIMB 9375 / NCTC 10341 / NRRL NRS-1264 / Gibson 46).